The following is an 83-amino-acid chain: Large ribosomal subunit protein uL23 (83 aa).

The protein belongs to the universal ribosomal protein uL23 family. In terms of assembly, part of the 50S ribosomal subunit. Contacts protein L29.

Functionally, binds to 23S rRNA. One of the proteins that surrounds the polypeptide exit tunnel on the outside of the ribosome. In Archaeoglobus fulgidus (strain ATCC 49558 / DSM 4304 / JCM 9628 / NBRC 100126 / VC-16), this protein is Large ribosomal subunit protein uL23.